The primary structure comprises 456 residues: Protein translocase subunit SecY (456 aa).

The Cytoplasmic portion of the chain corresponds to Met1 to Pro21. The chain crosses the membrane as a helical span at residues Gly22–Pro48. Residues Leu49 to Gln59 are Extracellular-facing. The helical intramembrane region spans Phe60–Leu67. Residues Phe60–Ile88 form a discontinuously helical membrane-spanning segment. An intramembrane segment occupies Ala68–Ile79. An intramembrane region (helical) is located at residues Gly80–Ile88. Residues Leu89–Ala109 are Cytoplasmic-facing. A helical transmembrane segment spans residues Phe110–Gly134. Topologically, residues Ser135 to Pro141 are extracellular. Residues Gln142–Ser166 traverse the membrane as a helical segment. Over Lys167–Ser172 the chain is Cytoplasmic. Residues Gly173–Phe191 traverse the membrane as a helical segment. Residues Asn192–Tyr224 lie on the Extracellular side of the membrane. A helical transmembrane segment spans residues Tyr225 to Arg246. At Val247 to Ser275 the chain is on the cytoplasmic side. Residues Asn276–Gln297 form a helical membrane-spanning segment. At Lys298–Phe334 the chain is on the extracellular side. The helical transmembrane segment at Arg335–Trp354 threads the bilayer. Topologically, residues Val355 to Ile397 are cytoplasmic. The chain crosses the membrane as a helical span at residues Thr398–Gly416. Residues Ser417 to Gly419 are Extracellular-facing. A helical transmembrane segment spans residues Gly420–Leu434. The Cytoplasmic portion of the chain corresponds to Tyr435 to Asp456.

Belongs to the SecY/SEC61-alpha family. As to quaternary structure, component of the Sec protein translocase complex. Heterotrimer consisting of alpha (SecY), beta (SecG) and gamma (SecE) subunits. The heterotrimers can form oligomers, although 1 heterotrimer is thought to be able to translocate proteins. Interacts with the ribosome. May interact with SecDF, and other proteins may be involved.

Its subcellular location is the cell membrane. The central subunit of the protein translocation channel SecYEG. Consists of two halves formed by TMs 1-5 and 6-10. These two domains form a lateral gate at the front which open onto the bilayer between TMs 2 and 7, and are clamped together by SecE at the back. The channel is closed by both a pore ring composed of hydrophobic SecY resides and a short helix (helix 2A) on the extracellular side of the membrane which forms a plug. The plug probably moves laterally to allow the channel to open. The ring and the pore may move independently. The chain is Protein translocase subunit SecY from Methanothermobacter thermautotrophicus (strain ATCC 29096 / DSM 1053 / JCM 10044 / NBRC 100330 / Delta H) (Methanobacterium thermoautotrophicum).